We begin with the raw amino-acid sequence, 293 residues long: Probable 2-(5''-triphosphoribosyl)-3'-dephosphocoenzyme-A synthase (293 aa).

It belongs to the CitG/MdcB family.

It carries out the reaction 3'-dephospho-CoA + ATP = 2'-(5''-triphospho-alpha-D-ribosyl)-3'-dephospho-CoA + adenine. Functionally, involved in the formation of 2-(5''-phosphoribosyl)-3'-dephosphocoenzyme-A, the prosthetic group of the acyl-carrier protein of the malonate decarboxylase. This is Probable 2-(5''-triphosphoribosyl)-3'-dephosphocoenzyme-A synthase from Pseudomonas aeruginosa (strain UCBPP-PA14).